A 239-amino-acid chain; its full sequence is Transcriptional regulatory protein RstA (239 aa).

One can recognise a Response regulatory domain in the interval 3-116 (TIVFVEDDAE…VLLARLRLHL (114 aa)). At Asp52 the chain carries 4-aspartylphosphate. Positions 136–235 (YKALHFGTLT…VRNKGYLFAP (100 aa)) form a DNA-binding region, ompR/PhoB-type.

Phosphorylated by RstB.

The protein resides in the cytoplasm. Functionally, member of the two-component regulatory system RstB/RstA. This is Transcriptional regulatory protein RstA (rstA) from Escherichia coli (strain K12).